A 101-amino-acid polypeptide reads, in one-letter code: Citrate lyase acyl carrier protein (101 aa).

Ser-14 is subject to O-(phosphoribosyl dephospho-coenzyme A)serine.

This sequence belongs to the CitD family. In terms of assembly, oligomer with a subunit composition of (alpha,beta,gamma)6.

Its subcellular location is the cytoplasm. In terms of biological role, covalent carrier of the coenzyme of citrate lyase. The sequence is that of Citrate lyase acyl carrier protein from Lacticaseibacillus casei (strain BL23) (Lactobacillus casei).